The chain runs to 2240 residues: Cadherin-89D (2240 aa).

Cadherin domains lie at 70–179 (SEGV…APEF), 180–295 (LNVP…PPKF), 296–411 (TEGV…VPEF), 412–528 (EADY…TPKF), and 529–643 (EHGN…APYE). Asparagine 114, asparagine 119, asparagine 191, asparagine 278, asparagine 334, asparagine 417, asparagine 585, asparagine 720, asparagine 752, asparagine 822, asparagine 833, asparagine 983, asparagine 989, asparagine 1006, asparagine 1255, asparagine 1318, asparagine 1486, asparagine 1529, and asparagine 1556 each carry an N-linked (GlcNAc...) asparagine glycan. Positions 814 to 844 (MPSEPTSRNITMGSRFRSRNRSRSSKSKRRL) are disordered. Cadherin domains follow at residues 824 to 927 (TMGS…APKF), 928 to 1087 (NALT…APMF), 1171 to 1284 (TTKC…APTF), 1285 to 1389 (KKSW…RPEF), and 1411 to 1520 (MLPV…PPKS). Residues 829-844 (FRSRNRSRSSKSKRRL) are compositionally biased toward basic residues. 2 consecutive Cadherin domains span residues 1534–1660 (QHAY…APKF) and 1661–1774 (RGNG…MPVE). Residues 1884 to 1904 (FVTVVLLALISLGALIAACCY) traverse the membrane as a helical segment. The Cytoplasmic segment spans residues 1905–2240 (VCMRQKRRLW…LEFSKSNSLF (336 aa)). Disordered regions lie at residues 1930–1972 (IAGI…PESV) and 2121–2140 (AHLE…EDSL). The span at 1939 to 1952 (QKQRRQRQQRHTQR) shows a compositional bias: basic residues. A compositionally biased stretch (polar residues) spans 1953-1964 (CSKGSTGSQRPT).

It localises to the cell membrane. Cadherins are calcium-dependent cell adhesion proteins. They preferentially interact with themselves in a homophilic manner in connecting cells. This Drosophila melanogaster (Fruit fly) protein is Cadherin-89D (Cad89D).